The sequence spans 764 residues: 5-methyltetrahydropteroyltriglutamate--homocysteine methyltransferase (764 aa).

5-methyltetrahydropteroyltri-L-glutamate is bound by residues 16 to 19 (RELK) and Lys112. Residues 431-433 (IGS) and Glu484 contribute to the L-homocysteine site. L-methionine-binding positions include 431-433 (IGS) and Glu484. 5-methyltetrahydropteroyltri-L-glutamate contacts are provided by residues 515-516 (RC) and Trp561. Asp599 serves as a coordination point for L-homocysteine. Asp599 contributes to the L-methionine binding site. Glu605 contacts 5-methyltetrahydropteroyltri-L-glutamate. 3 residues coordinate Zn(2+): His641, Cys643, and Glu665. The active-site Proton donor is His694. Residue Cys726 participates in Zn(2+) binding.

It belongs to the vitamin-B12 independent methionine synthase family. It depends on Zn(2+) as a cofactor.

The enzyme catalyses 5-methyltetrahydropteroyltri-L-glutamate + L-homocysteine = tetrahydropteroyltri-L-glutamate + L-methionine. It participates in amino-acid biosynthesis; L-methionine biosynthesis via de novo pathway; L-methionine from L-homocysteine (MetE route): step 1/1. In terms of biological role, catalyzes the transfer of a methyl group from 5-methyltetrahydrofolate to homocysteine resulting in methionine formation. The sequence is that of 5-methyltetrahydropteroyltriglutamate--homocysteine methyltransferase from Paraburkholderia phytofirmans (strain DSM 17436 / LMG 22146 / PsJN) (Burkholderia phytofirmans).